We begin with the raw amino-acid sequence, 399 residues long: uncharacterized protein (399 aa).

This sequence belongs to the TelA family.

This is an uncharacterized protein from Listeria monocytogenes serovar 1/2a (strain ATCC BAA-679 / EGD-e).